The following is a 652-amino-acid chain: DNA mismatch repair protein MutL (652 aa).

Belongs to the DNA mismatch repair MutL/HexB family.

Its function is as follows. This protein is involved in the repair of mismatches in DNA. It is required for dam-dependent methyl-directed DNA mismatch repair. May act as a 'molecular matchmaker', a protein that promotes the formation of a stable complex between two or more DNA-binding proteins in an ATP-dependent manner without itself being part of a final effector complex. This is DNA mismatch repair protein MutL from Aliivibrio salmonicida (strain LFI1238) (Vibrio salmonicida (strain LFI1238)).